Here is a 554-residue protein sequence, read N- to C-terminus: CTP synthase (554 aa).

The amidoligase domain stretch occupies residues 1-270; the sequence is MTKFVFVTGG…DGLICDKLRL (270 aa). Residue Ser-13 coordinates CTP. Ser-13 contacts UTP. Residues 14–19 and Asp-71 each bind ATP; that span reads SLGKGI. Residues Asp-71 and Glu-144 each contribute to the Mg(2+) site. Residues 151-153, 191-196, and Lys-227 each bind CTP; these read DIE and KTKPTQ. UTP contacts are provided by residues 191-196 and Lys-227; that span reads KTKPTQ. The 254-residue stretch at 295 to 548 folds into the Glutamine amidotransferase type-1 domain; it reads TVAMVGKYVD…IAAAKARHQA (254 aa). Gly-357 contacts L-glutamine. Cys-384 serves as the catalytic Nucleophile; for glutamine hydrolysis. Residues 385–388, Glu-408, and Arg-474 each bind L-glutamine; that span reads LGMQ. Catalysis depends on residues His-521 and Glu-523.

Belongs to the CTP synthase family. Homotetramer.

It catalyses the reaction UTP + L-glutamine + ATP + H2O = CTP + L-glutamate + ADP + phosphate + 2 H(+). The catalysed reaction is L-glutamine + H2O = L-glutamate + NH4(+). It carries out the reaction UTP + NH4(+) + ATP = CTP + ADP + phosphate + 2 H(+). Its pathway is pyrimidine metabolism; CTP biosynthesis via de novo pathway; CTP from UDP: step 2/2. Its activity is regulated as follows. Allosterically activated by GTP, when glutamine is the substrate; GTP has no effect on the reaction when ammonia is the substrate. The allosteric effector GTP functions by stabilizing the protein conformation that binds the tetrahedral intermediate(s) formed during glutamine hydrolysis. Inhibited by the product CTP, via allosteric rather than competitive inhibition. In terms of biological role, catalyzes the ATP-dependent amination of UTP to CTP with either L-glutamine or ammonia as the source of nitrogen. Regulates intracellular CTP levels through interactions with the four ribonucleotide triphosphates. This Verminephrobacter eiseniae (strain EF01-2) protein is CTP synthase.